We begin with the raw amino-acid sequence, 142 residues long: Transcription antitermination protein NusB (142 aa).

The protein belongs to the NusB family.

Its function is as follows. Involved in transcription antitermination. Required for transcription of ribosomal RNA (rRNA) genes. Binds specifically to the boxA antiterminator sequence of the ribosomal RNA (rrn) operons. The protein is Transcription antitermination protein NusB of Buchnera aphidicola subsp. Cinara cedri (strain Cc).